The following is a 561-amino-acid chain: Reductase FVEG_12641 (561 aa).

The segment at 1 to 26 (MGVQSTANLPKETVSHLDTAPTPKPG) is disordered. Residues 52–189 (QQHDGPVFCS…ICKGDTISLL (138 aa)) enclose the MOSC domain. The FAD-binding FR-type domain occupies 237 to 342 (SAPKTYTLVD…PGSNPGAMEN (106 aa)). FMN contacts are provided by residues 288-289 (FE), 305-307 (GVS), 313-316 (RGGS), and Thr-362. The 2Fe-2S ferredoxin-type domain maps to 474–561 (FEVEVDEPDS…GIGRLRIEID (88 aa)). A [2Fe-2S] cluster-binding site is contributed by Cys-512. FMN is bound at residue Ser-514. Cys-517, Cys-520, and Cys-548 together coordinate [2Fe-2S] cluster.

This sequence belongs to the PDR/VanB family. Monomer. It depends on FMN as a cofactor.

Functionally, reductase; part of the Fusarium detoxification of benzoxazolinone cluster 2 (FDB2) involved in the degradation of benzoxazolinones produced by the host plant. Maize, wheat, and rye produce the 2 benzoxazinone phytoanticipins 2,4-dihy-droxy-7-methoxy-1,4-benzoxazin-3-one (DIMBOA) and 2,4-dihydroxy-1,4-benzoxazin-3-one (DIBOA) that, due to their inherent instability once released, spontaneously degrade to the more stable corresponding benzoxazolinones, 6-methoxy-2-benzoxazolinone (MBOA) and 2-benzoxazolinone (BOA), respectively. The first step in the detoxification of benzoxazolinones involves the hydrolysis of the cyclic ester bond of benzoxazolinones by the FDB1 cluster gamma-lactamase MBL1 to aminophenols. MBL1 is able to convert BOA into 2-aminophenol (2-AP), as well as MBOA into 5-methoxy-2-aminophenol (2-AMP). The FDB2 cluster N-malonyltransferase FDB2/NAT1 then metabolizes aminophenols via N-malonylation to non-toxic malonamic acids. FDB2/NAT1 converts 2-AP into N-(2-hydroxyphenyl) malonamic acid (HPMA) and 2-AMP into N-(2-hydroxy-4-methoxyphenyl) malonamic acid (HMPMA). The duplicated dienlactone hydrolases DLH1 and DLH2 may provide redundant function for hydrolyzing the lactone moiety in the BOA molecule. The roles of the amidases an other enzymes encoded by the 2 FDB clusters have not been identified so far. This Gibberella moniliformis (strain M3125 / FGSC 7600) (Maize ear and stalk rot fungus) protein is Reductase FVEG_12641.